The sequence spans 102 residues: Citrate lyase acyl carrier protein (102 aa).

Position 14 is an O-(phosphoribosyl dephospho-coenzyme A)serine (Ser14).

It belongs to the CitD family. As to quaternary structure, oligomer with a subunit composition of (alpha,beta,gamma)6.

The protein resides in the cytoplasm. Its function is as follows. Covalent carrier of the coenzyme of citrate lyase. This is Citrate lyase acyl carrier protein from Streptococcus equi subsp. equi (strain 4047).